The chain runs to 185 residues: Elongation factor P (185 aa).

It belongs to the elongation factor P family.

The protein localises to the cytoplasm. Its pathway is protein biosynthesis; polypeptide chain elongation. Functionally, involved in peptide bond synthesis. Stimulates efficient translation and peptide-bond synthesis on native or reconstituted 70S ribosomes in vitro. Probably functions indirectly by altering the affinity of the ribosome for aminoacyl-tRNA, thus increasing their reactivity as acceptors for peptidyl transferase. The chain is Elongation factor P from Picosynechococcus sp. (strain ATCC 27264 / PCC 7002 / PR-6) (Agmenellum quadruplicatum).